Here is a 339-residue protein sequence, read N- to C-terminus: Ferrochelatase (339 aa).

Residues His202 and Glu283 each contribute to the Fe cation site.

Belongs to the ferrochelatase family.

It localises to the cytoplasm. The enzyme catalyses heme b + 2 H(+) = protoporphyrin IX + Fe(2+). Its pathway is porphyrin-containing compound metabolism; protoheme biosynthesis; protoheme from protoporphyrin-IX: step 1/1. Catalyzes the ferrous insertion into protoporphyrin IX. The chain is Ferrochelatase from Psychrobacter cryohalolentis (strain ATCC BAA-1226 / DSM 17306 / VKM B-2378 / K5).